The sequence spans 281 residues: Diphthine methyl ester synthase (281 aa).

Residues Leu-9, Asp-84, Gly-87, 112–113, and Leu-163 contribute to the S-adenosyl-L-methionine site; that span reads SI. Phosphoserine is present on Ser-171. S-adenosyl-L-methionine contacts are provided by Val-225 and His-250.

It belongs to the diphthine synthase family.

It catalyses the reaction 2-[(3S)-amino-3-carboxypropyl]-L-histidyl-[translation elongation factor 2] + 4 S-adenosyl-L-methionine = diphthine methyl ester-[translation elongation factor 2] + 4 S-adenosyl-L-homocysteine + 3 H(+). It participates in protein modification; peptidyl-diphthamide biosynthesis. In terms of biological role, S-adenosyl-L-methionine-dependent methyltransferase that catalyzes four methylations of the modified target histidine residue in translation elongation factor 2 (EF-2), to form an intermediate called diphthine methyl ester. The four successive methylation reactions represent the second step of diphthamide biosynthesis. The chain is Diphthine methyl ester synthase (Dph5) from Mus musculus (Mouse).